A 391-amino-acid chain; its full sequence is Curcumin synthase 2 (391 aa).

The active site involves C166.

Belongs to the thiolase-like superfamily. Chalcone/stilbene synthases family. In terms of assembly, homodimer.

It carries out the reaction (E)-feruloylacetyl-CoA + (E)-feruloyl-CoA + H2O = curcumin + CO2 + 2 CoA. It functions in the pathway secondary metabolite biosynthesis; flavonoid biosynthesis. Catalyzes the synthesis of curcumin by condensing feruloyl-CoA with a diketide-CoA in the curcuminoid biosynthesis. This chain is Curcumin synthase 2 (CURS2), found in Curcuma longa (Turmeric).